Here is a 454-residue protein sequence, read N- to C-terminus: Chromosomal replication initiator protein DnaA (454 aa).

Residues 1–74 (MFDLDKFWQF…IQEAYAYADM (74 aa)) form a domain I, interacts with DnaA modulators region. Positions 74 to 116 (MEIQPKFEVAGKEGPERLVTPQPRIKTNQEILENRRDEFAQDL) are domain II. A domain III, AAA+ region region spans residues 117 to 333 (QLNSKYTFDT…GALVKVQAHA (217 aa)). Glycine 161, glycine 163, lysine 164, and threonine 165 together coordinate ATP. The tract at residues 334–454 (TIEREDINVD…VYDLKAMLEH (121 aa)) is domain IV, binds dsDNA.

This sequence belongs to the DnaA family. As to quaternary structure, oligomerizes as a right-handed, spiral filament on DNA at oriC.

Its subcellular location is the cytoplasm. Plays an essential role in the initiation and regulation of chromosomal replication. ATP-DnaA binds to the origin of replication (oriC) to initiate formation of the DNA replication initiation complex once per cell cycle. Binds the DnaA box (a 9 base pair repeat at the origin) and separates the double-stranded (ds)DNA. Forms a right-handed helical filament on oriC DNA; dsDNA binds to the exterior of the filament while single-stranded (ss)DNA is stabiized in the filament's interior. The ATP-DnaA-oriC complex binds and stabilizes one strand of the AT-rich DNA unwinding element (DUE), permitting loading of DNA polymerase. After initiation quickly degrades to an ADP-DnaA complex that is not apt for DNA replication. Binds acidic phospholipids. This Lactobacillus johnsonii (strain CNCM I-12250 / La1 / NCC 533) protein is Chromosomal replication initiator protein DnaA.